The chain runs to 219 residues: Probable cutinase 4 (219 aa).

The signal sequence occupies residues 1 to 17; that stretch reads MILPSLLVASLSALAAA. 2 disulfides stabilise this stretch: Cys41–Cys120 and Cys67–Cys81. N-linked (GlcNAc...) asparagine glycosylation is present at Asn99. Ser131 serves as the catalytic Nucleophile. The cysteines at positions 182 and 189 are disulfide-linked. Asp186 is a catalytic residue. His199 (proton donor/acceptor) is an active-site residue.

It belongs to the cutinase family.

Its subcellular location is the secreted. It carries out the reaction cutin + H2O = cutin monomers.. In terms of biological role, catalyzes the hydrolysis of complex carboxylic polyesters found in the cell wall of plants. Degrades cutin, a macromolecule that forms the structure of the plant cuticle. The sequence is that of Probable cutinase 4 from Aspergillus terreus (strain NIH 2624 / FGSC A1156).